The chain runs to 412 residues: Divalent metal cation transporter MntH (412 aa).

Topologically, residues 1 to 19 (MTNYRVESSSGRAARKTRL) are cytoplasmic. A helical membrane pass occupies residues 20–39 (ALMGPAFIAAIGYIDPGNFA). Over 40–51 (TNIQAGASFGYQ) the chain is Periplasmic. A helical transmembrane segment spans residues 52-71 (LLWVVVWANLMAMLIQILSA). Residues 72 to 95 (KLGIATGKNLAEQIRDHYPRPVVW) lie on the Cytoplasmic side of the membrane. The chain crosses the membrane as a helical span at residues 96–118 (FYWVQAEIIAMATDLAEFIGAAI). Residues 119–125 (GFKLILG) are Periplasmic-facing. Residues 126-145 (VSLLQGAVLTGIATFLILML) traverse the membrane as a helical segment. Residues 146-155 (QRRGQKPLEK) lie on the Cytoplasmic side of the membrane. Residues 156-175 (VIGGLLLFVAAAYIVELIFS) form a helical membrane-spanning segment. Residues 176–196 (QPNLAQLGKGMVIPSLPTSEA) are Periplasmic-facing. Residues 197-220 (VFLAAGVLGATIMPHVIYLHSSLT) form a helical membrane-spanning segment. Residues 221-238 (QHLHGGSRQQRYSATKWD) are Cytoplasmic-facing. The helical transmembrane segment at 239–258 (VAIAMTIAGFVNLAMMATAA) threads the bilayer. The Periplasmic segment spans residues 259-276 (AAFHFSGHTGVADLDEAY). The chain crosses the membrane as a helical span at residues 277–297 (LTLQPLLSHAAATVFGLSLVA). Topologically, residues 298 to 327 (AGLSSTVVGTLAGQVVMQGFIRFHIPLWVR) are cytoplasmic. The chain crosses the membrane as a helical span at residues 328–344 (RTVTMLPSFIVILMGLD). At 345–350 (PTRILV) the chain is on the periplasmic side. Residues 351–370 (MSQVLLSFGIALALVPLLIF) form a helical membrane-spanning segment. At 371-387 (TSDSKLMGDLVNSKRVK) the chain is on the cytoplasmic side. A helical transmembrane segment spans residues 388 to 406 (QTGWVIVVLVVALNIWLLV). At 407-412 (GTALGL) the chain is on the periplasmic side.

Belongs to the NRAMP family.

Its subcellular location is the cell inner membrane. In terms of biological role, h(+)-stimulated, divalent metal cation uptake system. This is Divalent metal cation transporter MntH from Escherichia coli O9:H4 (strain HS).